The chain runs to 142 residues: Transcriptional regulator MraZ (142 aa).

2 SpoVT-AbrB domains span residues 5–47 and 76–119; these read EYQH…TINE and ACIV…SREK.

It belongs to the MraZ family. Forms oligomers.

It localises to the cytoplasm. The protein resides in the nucleoid. The protein is Transcriptional regulator MraZ of Clostridium botulinum (strain Eklund 17B / Type B).